A 152-amino-acid polypeptide reads, in one-letter code: Mitochondrial fission 1 protein (152 aa).

At Met-1 the chain carries N-acetylmethionine. At 1–122 (MEAVLNELVS…LIDKAMKKDG (122 aa)) the chain is on the cytoplasmic side. Ser-10 carries the post-translational modification Phosphoserine. The stretch at 71–104 (RDYVFYLAVGNYRLKEYEKALKYVRGLLQTEPQN) is one TPR repeat. Residues 123 to 143 (LVGMAIVGGMALGVAGLAGLI) traverse the membrane as a helical segment. The Mitochondrial intermembrane segment spans residues 144-152 (GLAVSKSKS).

It belongs to the FIS1 family. As to quaternary structure, interacts with DNM1L/DLP1 through the TPR region; may form part of a larger protein complex at the endoplasmic reticulum-mitochondrial interface during mitochondrial fission. Interacts with MARCHF5. Interacts with MIEF1. Interacts with PEX11A, PEX11B and PEX11G. In terms of processing, ubiquitinated by MARCHF5.

It is found in the mitochondrion outer membrane. The protein resides in the peroxisome membrane. In terms of biological role, involved in the fragmentation of the mitochondrial network and its perinuclear clustering. Plays a minor role in the recruitment and association of the fission mediator dynamin-related protein 1 (DNM1L) to the mitochondrial surface and mitochondrial fission. May not be essential for the assembly of functional fission complexes and the subsequent membrane scission event. Also mediates peroxisomal fission. May act when the products of fission are directed toward mitochondrial homeostasis, mitophagy, or apoptosis. Can induce cytochrome c release from the mitochondrion to the cytosol, ultimately leading to apoptosis. This is Mitochondrial fission 1 protein from Rattus norvegicus (Rat).